The sequence spans 326 residues: MTNQERAEEPVLRHDWTQGEAEALFALPFNELLFQAQTIHRRHFDPNEVQVSSLLSIKTGACSEDCAYCPQSAHYETGVKRESLMSLEDVLEAAQRAREEGATRFCMGAAWRSPRDGDLEAIAAMVEGVKALGMETCVTAGMLSDEQARRLKEAGLDYYNHNLDTSESYYGEIITTRTYQDRLDTLQRVRDAGMHVCCGGIVGMGESAADRAGLLIGLANLPRHPESVPINLLVRVEGTPLADTAALDPFDFVRTVAVARIMMPASRVRLSAGRSDMSDEMQALCFLAGANSIFYGDRLLTTENPQAQRDRRLFARLGLRMAGLGC.

One can recognise a Radical SAM core domain in the interval 47-274; sequence NEVQVSSLLS…ASRVRLSAGR (228 aa). Residues C62, C66, and C69 each coordinate [4Fe-4S] cluster. Residues C106, C137, C197, and R269 each contribute to the [2Fe-2S] cluster site.

This sequence belongs to the radical SAM superfamily. Biotin synthase family. Homodimer. The cofactor is [4Fe-4S] cluster. [2Fe-2S] cluster serves as cofactor.

It carries out the reaction (4R,5S)-dethiobiotin + (sulfur carrier)-SH + 2 reduced [2Fe-2S]-[ferredoxin] + 2 S-adenosyl-L-methionine = (sulfur carrier)-H + biotin + 2 5'-deoxyadenosine + 2 L-methionine + 2 oxidized [2Fe-2S]-[ferredoxin]. The protein operates within cofactor biosynthesis; biotin biosynthesis; biotin from 7,8-diaminononanoate: step 2/2. Catalyzes the conversion of dethiobiotin (DTB) to biotin by the insertion of a sulfur atom into dethiobiotin via a radical-based mechanism. The sequence is that of Biotin synthase from Methylococcus capsulatus (strain ATCC 33009 / NCIMB 11132 / Bath).